Consider the following 137-residue polypeptide: MAEFELEVLQPERIFFKDKVEMIVVRAIDGEIGIMAGHEPIVTPIGIGKLRIKKGGKWREAAIAGGILEVNQNKVVILSDAVEWPEEIDRQRALAAKERAEKKLQQKLPPDEFERYQAALYRAINRLRMIEERRNGD.

The protein belongs to the ATPase epsilon chain family. In terms of assembly, F-type ATPases have 2 components, CF(1) - the catalytic core - and CF(0) - the membrane proton channel. CF(1) has five subunits: alpha(3), beta(3), gamma(1), delta(1), epsilon(1). CF(0) has three main subunits: a, b and c.

Its subcellular location is the cell membrane. Its function is as follows. Produces ATP from ADP in the presence of a proton gradient across the membrane. The polypeptide is ATP synthase epsilon chain (Caldicellulosiruptor saccharolyticus (strain ATCC 43494 / DSM 8903 / Tp8T 6331)).